The chain runs to 194 residues: Histone H1.0 (194 aa).

Met-1 is subject to N-acetylmethionine. A compositionally biased stretch (low complexity) spans 1-11 (MTENSTSAPAA). Residues 1–29 (MTENSTSAPAAKPKRAKASKKSTDHPKYS) form a disordered region. The residue at position 2 (Thr-2) is an N-acetylthreonine; in Histone H1.0, N-terminally processed. The H15 domain occupies 24–97 (DHPKYSDMVV…GASGSFRLAK (74 aa)). Arg-42 is modified (citrulline). The segment at 84–194 (TKGVGASGSF…SSAKRAGKKK (111 aa)) is disordered. Position 104 is an ADP-ribosylserine (Ser-104). Positions 105–194 (VAFKKTKKEI…SSAKRAGKKK (90 aa)) are enriched in basic residues.

Belongs to the histone H1/H5 family. In terms of processing, ADP-ribosylated on Ser-104 in response to DNA damage.

The protein resides in the nucleus. Its subcellular location is the chromosome. In terms of biological role, histones H1 are necessary for the condensation of nucleosome chains into higher-order structures. The histones H1.0 are found in cells that are in terminal stages of differentiation or that have low rates of cell division. This Pongo abelii (Sumatran orangutan) protein is Histone H1.0 (H1-0).